The following is a 728-amino-acid chain: Propionyl-CoA carboxylase alpha chain, mitochondrial (728 aa).

The N-terminal 52 residues, Met1–Gly52, are a transit peptide targeting the mitochondrion. A Biotin carboxylation domain is found at Thr62–Pro509. Residue Lys65 is modified to N6-acetyllysine; alternate. Lys65 is modified (N6-succinyllysine; alternate). Lys119 carries the N6-succinyllysine modification. Lys150 is subject to N6-acetyllysine; alternate. Lys150 carries the N6-succinyllysine; alternate modification. Residue Lys177 coordinates ATP. One can recognise an ATP-grasp domain in the interval Lys181–Lys378. Position 200 is an N6-acetyllysine; alternate (Lys200). The residue at position 200 (Lys200) is an N6-succinyllysine; alternate. ATP is bound by residues Ala209–Ile270, Glu261, and Asn296. Ser252 carries the post-translational modification Phosphoserine. Lys262 is subject to N6-succinyllysine. Lys328 is subject to N6-acetyllysine; alternate. At Lys328 the chain carries N6-succinyllysine; alternate. Mg(2+) contacts are provided by Glu336, Glu349, and Asn351. Glu336, Glu349, and Asn351 together coordinate Mn(2+). Glu349 is an active-site residue. Lys385 and Lys407 each carry N6-succinyllysine. Phe409 serves as a coordination point for biotin. At Lys496 the chain carries N6-acetyllysine. N6-succinyllysine is present on residues Lys502, Lys513, and Lys648. Residues Lys653–Glu728 form the Biotinyl-binding domain. The residue at position 694 (Lys694) is an N6-biotinyllysine; by HLCS.

As to quaternary structure, the holoenzyme is a dodecamer composed of 6 PCCA/alpha subunits and 6 PCCB/beta subunits. Interacts (via the biotin carboxylation domain) with SIRT4. Interacts with SIRT3 and SIRT5. Requires Mg(2+) as cofactor. It depends on Mn(2+) as a cofactor. The cofactor is biotin. Post-translationally, acetylated. In terms of processing, the biotin cofactor is covalently attached to the C-terminal biotinyl-binding domain and is required for the catalytic activity. Biotinylation is catalyzed by HLCS.

The protein resides in the mitochondrion matrix. The catalysed reaction is propanoyl-CoA + hydrogencarbonate + ATP = (S)-methylmalonyl-CoA + ADP + phosphate + H(+). It catalyses the reaction butanoyl-CoA + hydrogencarbonate + ATP = (2S)-ethylmalonyl-CoA + ADP + phosphate + H(+). It functions in the pathway metabolic intermediate metabolism; propanoyl-CoA degradation; succinyl-CoA from propanoyl-CoA: step 1/3. Its function is as follows. This is one of the 2 subunits of the biotin-dependent propionyl-CoA carboxylase (PCC), a mitochondrial enzyme involved in the catabolism of odd chain fatty acids, branched-chain amino acids isoleucine, threonine, methionine, and valine and other metabolites. Propionyl-CoA carboxylase catalyzes the carboxylation of propionyl-CoA/propanoyl-CoA to D-methylmalonyl-CoA/(S)-methylmalonyl-CoA. Within the holoenzyme, the alpha subunit catalyzes the ATP-dependent carboxylation of the biotin carried by the biotin carboxyl carrier (BCC) domain, while the beta subunit then transfers the carboxyl group from carboxylated biotin to propionyl-CoA. Propionyl-CoA carboxylase also significantly acts on butyryl-CoA/butanoyl-CoA, which is converted to ethylmalonyl-CoA/(2S)-ethylmalonyl-CoA at a much lower rate. Other alternative minor substrates include (2E)-butenoyl-CoA/crotonoyl-CoA. The protein is Propionyl-CoA carboxylase alpha chain, mitochondrial of Homo sapiens (Human).